Reading from the N-terminus, the 1827-residue chain is Laminin subunit beta-4 (1827 aa).

The first 21 residues, 1–21 (MLLRLELSALLLLLIAAPVRL), serve as a signal peptide directing secretion. The Laminin N-terminal domain occupies 26-266 (VGNSCYPNLG…ALYEMVVRGS (241 aa)). N231 carries an N-linked (GlcNAc...) asparagine glycan. 19 cysteine pairs are disulfide-bonded: C267–C276, C269–C297, C299–C308, C311–C331, C334–C343, C336–C361, C364–C373, C376–C394, C397–C410, C399–C417, C419–C428, C431–C446, C449–C463, C451–C470, C472–C481, C484–C498, C501–C513, C503–C520, and C522–C531. Laminin EGF-like domains lie at 267 to 333 (CFCN…VCKR), 334 to 396 (CNCH…ACIP), 397 to 448 (CDCD…GCQL), and 449 to 500 (CRCN…GCIP). One can recognise a Laminin EGF-like 5; truncated domain in the interval 501–544 (CDCDIGGALKTECSSVDGQCKCRPNMVGQKCNDPAPGYFLAPLD). The region spanning 540–847 (LAPLDFYIYE…LIGSMSAFIH (308 aa)) is the Laminin IV type B domain. Intrachain disulfides connect C853–C865, C855–C872, C874–C883, C886–C898, C901–C913, C903–C920, C922–C931, C934–C944, C947–C956, C949–C963, C966–C975, C978–C992, C995–C1011, C997–C1022, C1024–C1033, C1036–C1051, C1054–C1068, C1056–C1075, C1078–C1087, C1090–C1103, C1106–C1126, C1108–C1133, C1135–C1144, C1147–C1160, C1163–C1175, C1165–C1182, C1184–C1193, C1196–C1208, C1211–C1223, C1213–C1230, C1232–C1241, and C1244–C1255. Laminin EGF-like domains lie at 853–900 (CNCH…GCSP), 901–946 (CDCD…LCRR), 947–994 (CQCN…PCEP), 995–1053 (CLCP…RCKE), 1054–1105 (CCCN…DCKE), 1106–1162 (CSCD…GCQP), 1163–1210 (CNCN…QCMF), and 1211–1257 (CDCN…ACEP). The N-linked (GlcNAc...) asparagine glycan is linked to N1001. The tract at residues 1258–1449 (CHACNHLWEK…LSAANINEEV (192 aa)) is domain II. 2 coiled-coil regions span residues 1294–1335 (ELQH…EIID) and 1385–1449 (NKIK…NEEV). An N-linked (GlcNAc...) asparagine glycan is attached at N1329. Residues 1450 to 1476 (CGAPGDAECEKAKCGGALCGKCGGPDC) are domain alpha. The tract at residues 1477–1827 (TGSLPISLNA…KVQRYNLCSP (351 aa)) is domain I. 14 N-linked (GlcNAc...) asparagine glycosylation sites follow: N1485, N1496, N1513, N1533, N1599, N1629, N1644, N1672, N1686, N1702, N1726, N1745, N1750, and N1761. 2 coiled-coil regions span residues 1485-1554 (NASK…EKVK) and 1584-1820 (DEIK…DKVQ).

Laminin is a complex glycoprotein, consisting of three different polypeptide chains (alpha, beta, gamma), which are bound to each other by disulfide bonds into a cross-shaped molecule comprising one long and three short arms with globules at each end.

It is found in the secreted. The protein resides in the extracellular space. It localises to the extracellular matrix. The protein localises to the basement membrane. Binding to cells via a high affinity receptor, laminin is thought to mediate the attachment, migration and organization of cells into tissues during embryonic development by interacting with other extracellular matrix components. Positively regulates apical-basal distribution of Muller glia cells in the retina. The sequence is that of Laminin subunit beta-4 (lamb4) from Danio rerio (Zebrafish).